A 426-amino-acid chain; its full sequence is Enolase (426 aa).

Gln-163 lines the (2R)-2-phosphoglycerate pocket. The active-site Proton donor is Glu-205. Mg(2+) is bound by residues Asp-242, Glu-286, and Asp-313. (2R)-2-phosphoglycerate contacts are provided by Lys-338, Arg-367, Ser-368, and Lys-389. Catalysis depends on Lys-338, which acts as the Proton acceptor.

Belongs to the enolase family. The cofactor is Mg(2+).

Its subcellular location is the cytoplasm. The protein resides in the secreted. It is found in the cell surface. The enzyme catalyses (2R)-2-phosphoglycerate = phosphoenolpyruvate + H2O. The protein operates within carbohydrate degradation; glycolysis; pyruvate from D-glyceraldehyde 3-phosphate: step 4/5. Functionally, catalyzes the reversible conversion of 2-phosphoglycerate (2-PG) into phosphoenolpyruvate (PEP). It is essential for the degradation of carbohydrates via glycolysis. The polypeptide is Enolase (Helicobacter acinonychis (strain Sheeba)).